We begin with the raw amino-acid sequence, 254 residues long: Transmembrane protein 269 (254 aa).

Transmembrane regions (helical) follow at residues 44-64 (IINA…FCSF), 69-89 (YCAS…GTMT), 113-135 (LASA…IYVL), 171-191 (LTKG…LFMI), and 210-230 (IVYI…TAFY).

It is found in the membrane. The protein is Transmembrane protein 269 of Mus musculus (Mouse).